A 496-amino-acid polypeptide reads, in one-letter code: Catalase isozyme 3 (496 aa).

The segment at 1–25 is disordered; the sequence is MTMDPTKFRPSSSHDTTVTTTNAGA. A compositionally biased stretch (polar residues) spans 9–23; that stretch reads RPSSSHDTTVTTTNA. Active-site residues include H67 and N140. Position 351 (Y351) interacts with heme. The interval 402–422 is disordered; that stretch reads PLRQAAPPTPLPPRPVAGRRE.

Belongs to the catalase family. As to quaternary structure, homotetramer. Requires heme as cofactor. As to expression, leaf mesophyll cells, pericarp, seedling roots and the coleoptile.

The protein localises to the mitochondrion. It carries out the reaction 2 H2O2 = O2 + 2 H2O. Occurs in almost all aerobically respiring organisms and serves to protect cells from the toxic effects of hydrogen peroxide. Its levels are highest in the light period and are lowest in the dark period, hence it may be important for scavenging hydrogen peroxide at night, rather than during the day. This chain is Catalase isozyme 3 (CAT3), found in Zea mays (Maize).